A 401-amino-acid polypeptide reads, in one-letter code: Heat shock transcription factor, Y-linked (401 aa).

Positions 1–11 (MAHVSSETQDV) are enriched in polar residues. Residues 1 to 30 (MAHVSSETQDVSPKDELTASEASTRSPLCE) form a disordered region. The DNA-binding element occupies 76–194 (LSLNFPRKLW…PQLLVRVKRR (119 aa)).

Belongs to the HSF family. As to expression, testis-specific. Present in Sertoli cells and spermatogenic cells (at protein level).

It is found in the nucleus. Its subcellular location is the cytoplasm. This is Heat shock transcription factor, Y-linked (HSFY1) from Homo sapiens (Human).